The following is a 957-amino-acid chain: Isoleucine--tRNA ligase (957 aa).

A 'HIGH' region motif is present at residues Pro-57–His-67. Residue Glu-594 coordinates L-isoleucyl-5'-AMP. Positions Lys-635–Ser-639 match the 'KMSKS' region motif. An ATP-binding site is contributed by Lys-638. 4 residues coordinate Zn(2+): Cys-920, Cys-923, Cys-940, and Cys-943.

The protein belongs to the class-I aminoacyl-tRNA synthetase family. IleS type 1 subfamily. In terms of assembly, monomer. Requires Zn(2+) as cofactor.

The protein localises to the cytoplasm. The enzyme catalyses tRNA(Ile) + L-isoleucine + ATP = L-isoleucyl-tRNA(Ile) + AMP + diphosphate. Functionally, catalyzes the attachment of isoleucine to tRNA(Ile). As IleRS can inadvertently accommodate and process structurally similar amino acids such as valine, to avoid such errors it has two additional distinct tRNA(Ile)-dependent editing activities. One activity is designated as 'pretransfer' editing and involves the hydrolysis of activated Val-AMP. The other activity is designated 'posttransfer' editing and involves deacylation of mischarged Val-tRNA(Ile). The polypeptide is Isoleucine--tRNA ligase (Laribacter hongkongensis (strain HLHK9)).